We begin with the raw amino-acid sequence, 180 residues long: Outer membrane protein YfaZ (180 aa).

The N-terminal stretch at 1-21 (MKKIALAGLAGMLLVSASVNA) is a signal peptide.

It localises to the cell outer membrane. The chain is Outer membrane protein YfaZ (yfaZ) from Escherichia coli (strain K12).